The chain runs to 605 residues: Exo-beta-1,3-glucanase (605 aa).

Residues 1-23 (MHVPPTDPARSAPPASPHRRRRP) form a disordered region. A signal peptide spans 1–44 (MHVPPTDPARSAPPASPHRRRRPKALGLTALAAAMLMAVPTTQA). Substrate contacts are provided by residues Q174, 194–196 (YGW), Q217, 446–449 (WRAD), and 480–481 (EH). The active-site Proton donor is the E502. Y505 contributes to the substrate binding site.

Belongs to the glycosyl hydrolase 55 family.

The protein localises to the secreted. It carries out the reaction Successive hydrolysis of beta-D-glucose units from the non-reducing ends of (1-&gt;3)-beta-D-glucans, releasing alpha-glucose.. Functionally, exo-beta-1,3-glucanase that specifically hydrolyzes laminarin and laminarioligosaccharides, producing glucose and laminaribiose as end products. In Streptomyces sp. (strain SirexAA-E / ActE), this protein is Exo-beta-1,3-glucanase.